The following is a 79-amino-acid chain: Sec-independent protein translocase protein TatA (79 aa).

A helical transmembrane segment spans residues 1–21; that stretch reads MGGFTSIWHWVIVLLVIVLLF. The tract at residues 48 to 79 is disordered; the sequence is EEEAKNEPKTLDAQVTQAKVHESSEIKNKQEG. Residues 66–79 show a composition bias toward basic and acidic residues; it reads KVHESSEIKNKQEG.

Belongs to the TatA/E family. The Tat system comprises two distinct complexes: a TatABC complex, containing multiple copies of TatA, TatB and TatC subunits, and a separate TatA complex, containing only TatA subunits. Substrates initially bind to the TatABC complex, which probably triggers association of the separate TatA complex to form the active translocon.

The protein localises to the cell inner membrane. In terms of biological role, part of the twin-arginine translocation (Tat) system that transports large folded proteins containing a characteristic twin-arginine motif in their signal peptide across membranes. TatA could form the protein-conducting channel of the Tat system. This chain is Sec-independent protein translocase protein TatA, found in Helicobacter acinonychis (strain Sheeba).